The sequence spans 763 residues: 5-methyltetrahydropteroyltriglutamate--homocysteine methyltransferase (763 aa).

Residues 16-19 and Lys117 contribute to the 5-methyltetrahydropteroyltri-L-glutamate site; that span reads RELK. L-homocysteine is bound by residues 438-440 and Glu491; that span reads IGS. Residues 438–440 and Glu491 each bind L-methionine; that span reads IGS. 5-methyltetrahydropteroyltri-L-glutamate-binding positions include 522 to 523 and Trp568; that span reads RC. Asp606 serves as a coordination point for L-homocysteine. Asp606 provides a ligand contact to L-methionine. Glu612 contributes to the 5-methyltetrahydropteroyltri-L-glutamate binding site. Zn(2+) contacts are provided by His648, Cys650, and Glu672. His701 (proton donor) is an active-site residue. Cys733 lines the Zn(2+) pocket.

It belongs to the vitamin-B12 independent methionine synthase family. Zn(2+) is required as a cofactor.

The enzyme catalyses 5-methyltetrahydropteroyltri-L-glutamate + L-homocysteine = tetrahydropteroyltri-L-glutamate + L-methionine. It participates in amino-acid biosynthesis; L-methionine biosynthesis via de novo pathway; L-methionine from L-homocysteine (MetE route): step 1/1. Functionally, catalyzes the transfer of a methyl group from 5-methyltetrahydrofolate to homocysteine resulting in methionine formation. The chain is 5-methyltetrahydropteroyltriglutamate--homocysteine methyltransferase from Pseudomonas paraeruginosa (strain DSM 24068 / PA7) (Pseudomonas aeruginosa (strain PA7)).